The sequence spans 1081 residues: Protein QUIRKY (1081 aa).

The 124-residue stretch at 1-124 folds into the C2 1 domain; the sequence is MNTTPFHSDP…SRRGEEGLVY (124 aa). Disordered stretches follow at residues 154–198 and 238–323; these read DTAG…MNIP and PQHV…MEKK. The segment covering 163–176 has biased composition (low complexity); it reads QQQQQQQQFHPPQQ. The span at 248–257 shows a compositional bias: basic and acidic residues; the sequence is NHPHRNDNHP. The span at 258-268 shows a compositional bias: pro residues; sequence QRPPSPPPPPS. 3 consecutive C2 domains span residues 318-440, 477-605, and 652-778; these read TTME…PQWY, SSDA…SKWH, and VCSD…TNSY. Positions 351, 352, 408, and 413 each coordinate Ca(2+). A run of 3 helical transmembrane segments spans residues 879 to 899, 916 to 936, and 1024 to 1044; these read WYRI…LDNI, LVLV…VVMI, and LFIA…AKMV.

This sequence belongs to the MCTP family. In terms of assembly, interacts with SUB/SCM and POQ at the plasma membrane. Binds to SUB/SCM at plasmodesmata (PD) in root epidermal cells to promote tissue morphogenesis. Ca(2+) serves as cofactor. Observed mainly in flowers, and, to a lower extent, in seedlings, roots, shoots, leaves, stems and inflorescences. Expressed in the vascular tissues of roots, cotyledons and rosette leaves. Accumulates in roots meristems.

The protein resides in the cell membrane. It localises to the cytoplasm. Its subcellular location is the golgi apparatus membrane. It is found in the cell junction. The protein localises to the plasmodesma. Its function is as follows. May be involved in Ca 2(+)-dependent signaling and membrane trafficking. Plays a role in fruit dehiscence. Components of the machinery involved in organ development mediated by the receptor-like kinase STRUBBELIG (SUB). Collaboratively with SUB and POQ, regulates cell growth anisotropy during gynoecium development, thus linking together cell-cell communication and cellular growth. Together with SUB/SCM, links RLK-dependent signal transduction and intercellular communication mediated by plasmodesmata (PD) to regulate tissue morphogenesis. May function as a signaling molecule by regulating the trafficking of other regulators. This is Protein QUIRKY from Arabidopsis thaliana (Mouse-ear cress).